A 102-amino-acid polypeptide reads, in one-letter code: Large ribosomal subunit protein bL28 (102 aa).

The segment covering 1–20 (MSNSCDLTGHGWQNGNMVSH) has biased composition (polar residues). Residues 1-27 (MSNSCDLTGHGWQNGNMVSHSNRKTKK) form a disordered region.

The protein belongs to the bacterial ribosomal protein bL28 family.

In Neorickettsia sennetsu (strain ATCC VR-367 / Miyayama) (Ehrlichia sennetsu), this protein is Large ribosomal subunit protein bL28.